The sequence spans 166 residues: NAD(P)H-quinone oxidoreductase subunit I, chloroplastic (166 aa).

2 consecutive 4Fe-4S ferredoxin-type domains span residues 55–84 (GRIH…VDWK) and 95–124 (LNYS…MTEE). Positions 64, 67, 70, 74, 104, 107, 110, and 114 each coordinate [4Fe-4S] cluster.

The protein belongs to the complex I 23 kDa subunit family. NDH is composed of at least 16 different subunits, 5 of which are encoded in the nucleus. Requires [4Fe-4S] cluster as cofactor.

The protein resides in the plastid. It is found in the chloroplast thylakoid membrane. It catalyses the reaction a plastoquinone + NADH + (n+1) H(+)(in) = a plastoquinol + NAD(+) + n H(+)(out). The enzyme catalyses a plastoquinone + NADPH + (n+1) H(+)(in) = a plastoquinol + NADP(+) + n H(+)(out). In terms of biological role, NDH shuttles electrons from NAD(P)H:plastoquinone, via FMN and iron-sulfur (Fe-S) centers, to quinones in the photosynthetic chain and possibly in a chloroplast respiratory chain. The immediate electron acceptor for the enzyme in this species is believed to be plastoquinone. Couples the redox reaction to proton translocation, and thus conserves the redox energy in a proton gradient. The chain is NAD(P)H-quinone oxidoreductase subunit I, chloroplastic from Rensonia salvadorica.